The primary structure comprises 370 residues: Cyanuric acid amidohydrolase (370 aa).

An RU A region spans residues 1–103 (MQAQVFRVPM…TIFTVQKTDN (103 aa)). Residues Arg-51 and 82-83 (SG) each bind substrate. Positions 113 to 250 (RLAVQQIFTR…NEIIVMGNSR (138 aa)) are RU B. Lys-163 is an active-site residue. Substrate is bound by residues Arg-195 and 233–234 (SA). Residue Ser-233 is the Nucleophile of the active site. The interval 256–370 (LVIGHAEMKD…GPVAVIARTA (115 aa)) is RU C. Glu-303 serves as a coordination point for Mg(2+). Residues Arg-330 and 349–350 (SG) each bind substrate. Ser-352, Gln-355, Gly-356, Pro-357, and Gly-360 together coordinate Mg(2+).

This sequence belongs to the cyclic amide hydrolase (CyAH) family. Homotetramer.

The enzyme catalyses cyanurate + H2O = 1-carboxybiuret + H(+). It functions in the pathway xenobiotic degradation; atrazine degradation; biuret from cyanurate: step 1/1. Inhibited by barbituric acid. Functionally, responsible for the hydrolysis of cyanuric acid, an intermediate formed during catabolism of s-triazine based compounds in herbicides such as atrazine and polymers such as melamine. Catalyzes the hydrolytic opening of the s-triazine ring of cyanuric acid (2,4,6-trihydroxy-s-triazine) to yield carbon dioxide and carboxybiuret, which spontaneously decarboxylates to biuret. This is Cyanuric acid amidohydrolase (trzD) from Pseudomonas sp.